Here is a 340-residue protein sequence, read N- to C-terminus: TD and POZ domain-containing protein 5 (340 aa).

Residues 19 to 149 (EFCYVWTIRN…ENKLTLCCKV (131 aa)) enclose the MATH domain. The BTB domain maps to 188–255 (TDCCLLVAGH…IYTGKAPHLQ (68 aa)).

It belongs to the Tdpoz family.

The protein is TD and POZ domain-containing protein 5 of Mus musculus (Mouse).